A 281-amino-acid polypeptide reads, in one-letter code: Transmembrane protein 163 (281 aa).

The Cytoplasmic segment spans residues 1 to 80 (MEPLDTELCY…HEAQNYRKKA (80 aa)). Residues 16–44 (IVQPSCNGQTPPGHRTLSPTQQMDHEQQM) are disordered. A helical membrane pass occupies residues 81-101 (LWVSWLSIAITLILAIAAFTV). The Extracellular segment spans residues 102–108 (SVMRYSA). The chain crosses the membrane as a helical span at residues 109 to 129 (SSFGFALDAVLDVLSSAIVLW). Topologically, residues 130–145 (RYSNAAAVHSAHREYM) are cytoplasmic. Residues 146-166 (ACCILGVIFLLSSICIVSKAI) form a helical membrane-spanning segment. The Extracellular segment spans residues 167 to 179 (HDLSIRVMPEVDG). A helical membrane pass occupies residues 180 to 200 (FLFSVSILSGILCSLLAAIKF). The Cytoplasmic segment spans residues 201–209 (MLGKVLTSR). Residues 210–230 (ALITDGFNSLVGGIMGFSILL) form a helical membrane-spanning segment. At 231 to 240 (SAEVYKHNSK) the chain is on the extracellular side. Residues 241-261 (VWYLDGSVGILIGLIIMSYGI) traverse the membrane as a helical segment. Residues 262–281 (KLLMDMVPRVRQTRHYEMFE) lie on the Cytoplasmic side of the membrane.

This sequence belongs to the TMEM163 family.

The protein resides in the cytoplasmic vesicle. The protein localises to the secretory vesicle. Its subcellular location is the synaptic vesicle membrane. It is found in the early endosome membrane. Its function is as follows. May bind zinc and other divalent cations and recruit them to vesicular organelles. The sequence is that of Transmembrane protein 163 (tmem163) from Xenopus laevis (African clawed frog).